A 199-amino-acid chain; its full sequence is Peroxiredoxin-1 (199 aa).

Residue serine 2 is modified to N-acetylserine. A Thioredoxin domain is found at 6–165 (AKIGYPAPNF…ILRLVQAFQF (160 aa)). Residue lysine 7 is modified to N6-acetyllysine; alternate. Lysine 7 is covalently cross-linked (Glycyl lysine isopeptide (Lys-Gly) (interchain with G-Cter in SUMO2); alternate). N6-acetyllysine is present on lysine 16. Serine 32 is subject to Phosphoserine. The active-site Cysteine sulfenic acid (-SOH) intermediate is the cysteine 52. The residue at position 90 (threonine 90) is a Phosphothreonine. Lysine 120 is covalently cross-linked (Glycyl lysine isopeptide (Lys-Gly) (interchain with G-Cter in SUMO2)). An N6-acetyllysine modification is found at lysine 136. The disordered stretch occupies residues 176–199 (GWKPGSDTIKPDVQKSKEYFSKQK). Basic and acidic residues predominate over residues 184–199 (IKPDVQKSKEYFSKQK). Lysine 185 is covalently cross-linked (Glycyl lysine isopeptide (Lys-Gly) (interchain with G-Cter in SUMO1)). Lysine 197 is subject to N6-acetyllysine.

The protein belongs to the peroxiredoxin family. AhpC/Prx1 subfamily. Homodimer; disulfide-linked, upon oxidation. 5 homodimers assemble to form a ring-like decamer. Interacts with GDPD5; forms a mixed-disulfide with GDPD5. Interacts with SESN1 and SESN2. Interacts with FAM107A. Phosphorylated on Thr-90 during the M-phase, which leads to a decrease in enzymatic activity. Post-translationally, acetylation increases reducing activity and resistance to superoxidation. Deacetylated by HDAC6 which decreases reducing activity.

Its subcellular location is the cytoplasm. It catalyses the reaction a hydroperoxide + [thioredoxin]-dithiol = an alcohol + [thioredoxin]-disulfide + H2O. Thiol-specific peroxidase that catalyzes the reduction of hydrogen peroxide and organic hydroperoxides to water and alcohols, respectively. Plays a role in cell protection against oxidative stress by detoxifying peroxides and as sensor of hydrogen peroxide-mediated signaling events. Might participate in the signaling cascades of growth factors and tumor necrosis factor-alpha by regulating the intracellular concentrations of H(2)O(2). Reduces an intramolecular disulfide bond in GDPD5 that gates the ability to GDPD5 to drive postmitotic motor neuron differentiation. The protein is Peroxiredoxin-1 (PRDX1) of Cricetulus griseus (Chinese hamster).